The sequence spans 327 residues: Phenylalanine--tRNA ligase alpha subunit (327 aa).

Glu252 serves as a coordination point for Mg(2+).

Belongs to the class-II aminoacyl-tRNA synthetase family. Phe-tRNA synthetase alpha subunit type 1 subfamily. Tetramer of two alpha and two beta subunits. Mg(2+) is required as a cofactor.

It is found in the cytoplasm. It carries out the reaction tRNA(Phe) + L-phenylalanine + ATP = L-phenylalanyl-tRNA(Phe) + AMP + diphosphate + H(+). This chain is Phenylalanine--tRNA ligase alpha subunit, found in Shewanella baltica (strain OS223).